The primary structure comprises 146 residues: Antirestriction protein KlcA (146 aa).

The protein belongs to the antirestriction protein family.

Could be involved in overcoming restriction barriers during establishment after conjugative transfer. The protein is Antirestriction protein KlcA (klcA) of Escherichia coli.